A 560-amino-acid chain; its full sequence is Putative transport protein ESA_02488 (560 aa).

The next 5 helical transmembrane spans lie at 8-28 (LLNGNYILLLFVVLALGLCLG), 32-52 (LGSVQLGNSIGVLVVSLLLGQ), 66-86 (FMLFIFCVGVEAGPNFFSIFF), 91-111 (NYLMLALVMVGSALLIALGLG), and 158-178 (HLSLGYALTYLIGLVSLIFGA). RCK C-terminal domains lie at 200 to 288 (RGLD…SFRN) and 292 to 373 (VFDR…RIGF). 5 helical membrane-spanning segments follow: residues 383–403 (LLAFCAFFIVGLMIGMITFQF), 406–426 (FSFGIGNAAGLLFAGIMLGFL), 447–467 (FGLMVFMAGVGLSAGSGIGHG), 475–495 (MLFAGLIVSLLPVVICFLFGA), and 539–559 (YAIANVLLTLAGTLIVIIWPG).

Belongs to the AAE transporter (TC 2.A.81) family. YbjL subfamily.

It is found in the cell membrane. This chain is Putative transport protein ESA_02488, found in Cronobacter sakazakii (strain ATCC BAA-894) (Enterobacter sakazakii).